We begin with the raw amino-acid sequence, 72 residues long: Translation initiation factor IF-1 (72 aa).

The region spanning 1 to 72 is the S1-like domain; it reads MAREDHIEME…SKGRIVYRAR (72 aa).

This sequence belongs to the IF-1 family. As to quaternary structure, component of the 30S ribosomal translation pre-initiation complex which assembles on the 30S ribosome in the order IF-2 and IF-3, IF-1 and N-formylmethionyl-tRNA(fMet); mRNA recruitment can occur at any time during PIC assembly.

Its subcellular location is the cytoplasm. In terms of biological role, one of the essential components for the initiation of protein synthesis. Stabilizes the binding of IF-2 and IF-3 on the 30S subunit to which N-formylmethionyl-tRNA(fMet) subsequently binds. Helps modulate mRNA selection, yielding the 30S pre-initiation complex (PIC). Upon addition of the 50S ribosomal subunit IF-1, IF-2 and IF-3 are released leaving the mature 70S translation initiation complex. The polypeptide is Translation initiation factor IF-1 (Chromohalobacter salexigens (strain ATCC BAA-138 / DSM 3043 / CIP 106854 / NCIMB 13768 / 1H11)).